The chain runs to 283 residues: Acetylglutamate kinase (283 aa).

Substrate contacts are provided by residues 63–64, arginine 85, and asparagine 178; that span reads GG.

It belongs to the acetylglutamate kinase family. ArgB subfamily.

The protein resides in the cytoplasm. The enzyme catalyses N-acetyl-L-glutamate + ATP = N-acetyl-L-glutamyl 5-phosphate + ADP. It functions in the pathway amino-acid biosynthesis; L-arginine biosynthesis; N(2)-acetyl-L-ornithine from L-glutamate: step 2/4. Catalyzes the ATP-dependent phosphorylation of N-acetyl-L-glutamate. The sequence is that of Acetylglutamate kinase from Prochlorococcus marinus (strain AS9601).